Consider the following 140-residue polypeptide: MEIDYYDYEKLLEKAYEELPENVKHHKSRFEVPGALVTIEGNKTIIENFKDIAEALNRDPQHLLKFLLREIATAGTLEGKRVVLQGRFTPYLIANKLKKYIKEYVICPVCGSPDTKIIKRDRFYFLKCEACGAETPIQHL.

It belongs to the eIF-2-beta/eIF-5 family. As to quaternary structure, heterotrimer composed of an alpha, a beta and a gamma chain.

In terms of biological role, eIF-2 functions in the early steps of protein synthesis by forming a ternary complex with GTP and initiator tRNA. This chain is Translation initiation factor 2 subunit beta (eif2b), found in Pyrococcus horikoshii (strain ATCC 700860 / DSM 12428 / JCM 9974 / NBRC 100139 / OT-3).